Consider the following 245-residue polypeptide: Ribosomal RNA small subunit methyltransferase G (245 aa).

Residues glycine 80, phenylalanine 85, aspartate 103–threonine 105, alanine 131–glutamate 132, and arginine 150 contribute to the S-adenosyl-L-methionine site.

Belongs to the methyltransferase superfamily. RNA methyltransferase RsmG family.

Its subcellular location is the cytoplasm. Functionally, specifically methylates the N7 position of a guanine in 16S rRNA. This Deinococcus geothermalis (strain DSM 11300 / CIP 105573 / AG-3a) protein is Ribosomal RNA small subunit methyltransferase G.